The chain runs to 39 residues: Cytochrome b559 subunit beta (39 aa).

Residues 14-30 (WLTVHGLAVPTVSFLGS) traverse the membrane as a helical segment. His-18 contributes to the heme binding site.

It belongs to the PsbE/PsbF family. In terms of assembly, heterodimer of an alpha subunit and a beta subunit. PSII is composed of 1 copy each of membrane proteins PsbA, PsbB, PsbC, PsbD, PsbE, PsbF, PsbH, PsbI, PsbJ, PsbK, PsbL, PsbM, PsbT, PsbX, PsbY, PsbZ, Psb30/Ycf12, at least 3 peripheral proteins of the oxygen-evolving complex and a large number of cofactors. It forms dimeric complexes. It depends on heme b as a cofactor.

The protein localises to the plastid. Its subcellular location is the chloroplast thylakoid membrane. This b-type cytochrome is tightly associated with the reaction center of photosystem II (PSII). PSII is a light-driven water:plastoquinone oxidoreductase that uses light energy to abstract electrons from H(2)O, generating O(2) and a proton gradient subsequently used for ATP formation. It consists of a core antenna complex that captures photons, and an electron transfer chain that converts photonic excitation into a charge separation. In Cucumis sativus (Cucumber), this protein is Cytochrome b559 subunit beta.